The sequence spans 504 residues: Glucose-6-phosphate isomerase (504 aa).

E333 functions as the Proton donor in the catalytic mechanism. Residues H364 and K473 contribute to the active site.

This sequence belongs to the GPI family.

It localises to the cytoplasm. It carries out the reaction alpha-D-glucose 6-phosphate = beta-D-fructose 6-phosphate. It participates in carbohydrate biosynthesis; gluconeogenesis. It functions in the pathway carbohydrate degradation; glycolysis; D-glyceraldehyde 3-phosphate and glycerone phosphate from D-glucose: step 2/4. Functionally, catalyzes the reversible isomerization of glucose-6-phosphate to fructose-6-phosphate. The protein is Glucose-6-phosphate isomerase of Stenotrophomonas maltophilia (strain K279a).